A 132-amino-acid polypeptide reads, in one-letter code: Tail assembly protein Gp24 (132 aa).

This sequence belongs to the L5likevirus tail assembly protein family. In terms of assembly, interacts with tail assembly protein Gp25 and tape measure protein.

Functionally, promotes tail assembly by creating a scaffold for the tail tube proteins. The tail assembly proteins Gp24 and Gp25 would wrap the linear tape measure protein to create a tail assembly scaffold. It would allow polymerization of tail tube protein during which Gp24 and Gp25 are released and therefore are absent from the mature virion. The tail assembly protein Gp25 is produced by a rare -1 ribosomal frameshift. The ratio Gp24/Gp25 is important for proper tail assembly. This Mycobacterium (Mycobacteriophage L5) protein is Tail assembly protein Gp24 (24).